The primary structure comprises 365 residues: Probable caffeine synthase 2 (365 aa).

Tyrosine 19 contacts S-adenosyl-L-homocysteine. Residue threonine 26 coordinates caffeine. Residues cysteine 62, aspartate 99, leucine 100, serine 134, and phenylalanine 135 each contribute to the S-adenosyl-L-homocysteine site. Caffeine is bound by residues tyrosine 152, histidine 155, and tryptophan 156. Asparagine 173 is a Mg(2+) binding site. Arginine 221 contacts caffeine. Aspartate 259, phenylalanine 261, and asparagine 262 together coordinate Mg(2+). Phenylalanine 317 contacts caffeine.

It belongs to the methyltransferase superfamily. Type-7 methyltransferase family. Mg(2+) serves as cofactor.

The catalysed reaction is 7-methylxanthine + S-adenosyl-L-methionine = theobromine + S-adenosyl-L-homocysteine + H(+). It carries out the reaction theobromine + S-adenosyl-L-methionine = caffeine + S-adenosyl-L-homocysteine + H(+). The enzyme catalyses 1,7-dimethylxanthine + S-adenosyl-L-methionine = caffeine + S-adenosyl-L-homocysteine + H(+). The protein operates within alkaloid biosynthesis. May be involved in the biosynthesis of caffeine. Catalyzes the conversion of 7-methylxanthine (7mX) to theobromine and of theobromine to caffeine. Has 1-N-methylation activity. The polypeptide is Probable caffeine synthase 2 (Camellia sinensis (Tea plant)).